We begin with the raw amino-acid sequence, 131 residues long: Small ribosomal subunit protein uS11 (131 aa).

The protein belongs to the universal ribosomal protein uS11 family. In terms of assembly, part of the 30S ribosomal subunit. Interacts with proteins S7 and S18. Binds to IF-3.

Located on the platform of the 30S subunit, it bridges several disparate RNA helices of the 16S rRNA. Forms part of the Shine-Dalgarno cleft in the 70S ribosome. The polypeptide is Small ribosomal subunit protein uS11 (Wolinella succinogenes (strain ATCC 29543 / DSM 1740 / CCUG 13145 / JCM 31913 / LMG 7466 / NCTC 11488 / FDC 602W) (Vibrio succinogenes)).